The primary structure comprises 648 residues: Macrolide export ATP-binding/permease protein MacB (648 aa).

The region spanning 5–243 (LELCNVSRSY…QGVDAAVVNT (239 aa)) is the ABC transporter domain. An ATP-binding site is contributed by 41 to 48 (GVSGSGKS). A run of 5 helical transmembrane segments spans residues 273–293 (LLTM…VVVG), 417–437 (ANVV…IGVA), 523–543 (LFLT…VMNI), 578–598 (LVCL…AFML), and 611–631 (LTAL…FGWL).

This sequence belongs to the ABC transporter superfamily. Macrolide exporter (TC 3.A.1.122) family. As to quaternary structure, homodimer. Part of the tripartite efflux system MacAB-TolC, which is composed of an inner membrane transporter, MacB, a periplasmic membrane fusion protein, MacA, and an outer membrane component, TolC. The complex forms a large protein conduit and can translocate molecules across both the inner and outer membranes. Interacts with MacA.

It localises to the cell inner membrane. Part of the tripartite efflux system MacAB-TolC. MacB is a non-canonical ABC transporter that contains transmembrane domains (TMD), which form a pore in the inner membrane, and an ATP-binding domain (NBD), which is responsible for energy generation. Confers resistance against macrolides. The sequence is that of Macrolide export ATP-binding/permease protein MacB from Salmonella paratyphi A (strain ATCC 9150 / SARB42).